The sequence spans 348 residues: ELAV-like protein 3 (348 aa).

3 consecutive RRM domains span residues 34-112 (TNLI…YARP), 120-200 (ANLY…FANN), and 265-343 (WCIF…FKTS).

Belongs to the RRM elav family. In terms of tissue distribution, expression is neural-specific in both embryos and adults. Expressed from neurula stage onwards in primary motor-, inter- and sensory-neurons. Expressed in the closing neural tube and motor neurons of stage 18 embryos, and primarily in the ventricular zone and dorsal region of the tailbud and adult brain. Expressed from stage 26 onwards in the differentiating ganglion cell layer of the retina, extending to the inner nuclear layer at later stages.

Functionally, RNA-binding protein that binds to AU-rich element (ARE) sequences of target mRNAs. May also bind poly-A tracts via RRM 3. May be involved in neuronal differentiation and maintenance. The sequence is that of ELAV-like protein 3 (elavl3) from Xenopus laevis (African clawed frog).